The sequence spans 54 residues: MSKLFIFFLLVALLAFVSSEAAECVAKGQNCIVGKSTCCIGQCIIKDHVLGSCE.

Positions 1–21 (MSKLFIFFLLVALLAFVSSEA) are cleaved as a signal peptide. Intrachain disulfides connect C24/C39, C31/C43, and C38/C53.

In terms of tissue distribution, expressed by the venom duct.

The protein resides in the secreted. In terms of biological role, this endoparasitoid wasp peptide has a role in disruption of the cellular host immune response, since it reduces the capacity of D.saccharalis hemocytes to encapsulate foreign bodies. On the other hand, it shows no effect on the humoral immune response, since it has no effect on phenoloxidase activity. This Cotesia flavipes (Parasitic wasp) protein is H-bracotoxin-Cf4.